Reading from the N-terminus, the 110-residue chain is uncharacterized protein (110 aa).

This is an uncharacterized protein from Homo sapiens (Human).